We begin with the raw amino-acid sequence, 421 residues long: Queuine tRNA-ribosyltransferase accessory subunit 2 (421 aa).

Zn(2+)-binding residues include cysteine 328, cysteine 330, cysteine 333, and histidine 359.

It belongs to the queuine tRNA-ribosyltransferase family. QTRT2 subfamily. Heterodimer of a catalytic subunit and an accessory subunit. Zn(2+) serves as cofactor.

It is found in the cytoplasm. Functionally, non-catalytic subunit of the queuine tRNA-ribosyltransferase (TGT) that catalyzes the base-exchange of a guanine (G) residue with queuine (Q) at position 34 (anticodon wobble position) in tRNAs with GU(N) anticodons (tRNA-Asp, -Asn, -His and -Tyr), resulting in the hypermodified nucleoside queuosine (7-(((4,5-cis-dihydroxy-2-cyclopenten-1-yl)amino)methyl)-7-deazaguanosine). This Aedes aegypti (Yellowfever mosquito) protein is Queuine tRNA-ribosyltransferase accessory subunit 2.